The primary structure comprises 208 residues: ATP-dependent Clp protease proteolytic subunit (208 aa).

Ser-106 serves as the catalytic Nucleophile. The active site involves His-131.

Belongs to the peptidase S14 family. As to quaternary structure, fourteen ClpP subunits assemble into 2 heptameric rings which stack back to back to give a disk-like structure with a central cavity, resembling the structure of eukaryotic proteasomes.

It localises to the cytoplasm. The catalysed reaction is Hydrolysis of proteins to small peptides in the presence of ATP and magnesium. alpha-casein is the usual test substrate. In the absence of ATP, only oligopeptides shorter than five residues are hydrolyzed (such as succinyl-Leu-Tyr-|-NHMec, and Leu-Tyr-Leu-|-Tyr-Trp, in which cleavage of the -Tyr-|-Leu- and -Tyr-|-Trp bonds also occurs).. Functionally, cleaves peptides in various proteins in a process that requires ATP hydrolysis. Has a chymotrypsin-like activity. Plays a major role in the degradation of misfolded proteins. The polypeptide is ATP-dependent Clp protease proteolytic subunit (Roseobacter denitrificans (strain ATCC 33942 / OCh 114) (Erythrobacter sp. (strain OCh 114))).